The following is a 2281-amino-acid chain: Retinal-specific phospholipid-transporting ATPase ABCA4 (2281 aa).

Topologically, residues 1-24 (MGFARQIKLLLWKNWTLRKRQKIR) are cytoplasmic. A helical transmembrane segment spans residues 25 to 45 (FVVELVWPLSLFLVLIWLRNV). Over 46–646 (NPLYSKHECH…MPYPCFVDDS (601 aa)) the chain is Extracellular. Intrachain disulfides connect cysteine 54/cysteine 81 and cysteine 75/cysteine 324. A glycan (N-linked (GlcNAc...) asparagine) is linked at asparagine 98. The Mg(2+) site is built by serine 336 and asparagine 338. A disulfide bridge links cysteine 370 with cysteine 519. N-linked (Hex...) asparagine glycosylation is found at asparagine 415 and asparagine 504. Residues arginine 587 and arginine 653 each contribute to the an N-all-trans-retinylidenephosphatidylethanolamine site. 3 disulfides stabilise this stretch: cysteine 641–cysteine 1488, cysteine 1442–cysteine 1453, and cysteine 1486–cysteine 1500. Residues 647-667 (FMIILNRCFPIFMVLAWIYSV) form a helical membrane-spanning segment. Residues 668–699 (SMTVKSIVLEKELRLKETLKNQGVSNRVIWCT) lie on the Cytoplasmic side of the membrane. The helical transmembrane segment at 700-720 (WFLDSFSIMSMSICLLTIFIM) threads the bilayer. Residues 721-730 (HGRILHYSNP) are Extracellular-facing. A helical membrane pass occupies residues 731–751 (FILFLFLLAFSIATIMQCFLL). At 752-759 (STFFSRAS) the chain is on the cytoplasmic side. Residues 760-780 (LAAACSGVIYFTLYLPHILCF) traverse the membrane as a helical segment. The Extracellular segment spans residues 781-835 (AWQDRITADMKMAVSLLSPVAFGFGTEYLARFEEQGVGLQWSNIGNSPMEGDEFS). The helical transmembrane segment at 836–856 (FLMSMKMMLLDAALYGLLAWY) threads the bilayer. At 857-1374 (LDQVFPGDYG…IRSHKDFLAQ (518 aa)) the chain is on the cytoplasmic side. Phosphothreonine is present on threonine 901. An ABC transporter 1 domain is found at 929 to 1160 (VCVKNLVKIF…FGTGFYLTLV (232 aa)). ATP is bound by residues phenylalanine 938, glycine 966, and lysine 969. Threonine 970 contributes to the Mg(2+) binding site. ATP is bound by residues threonine 971, glutamine 1010, lysine 1054, glycine 1064, glycine 1065, and histidine 1118. The residue at position 1185 (serine 1185) is a Phosphoserine. The tract at residues 1295 to 1340 (ENINLRHPCSGPSEKAGQTPQGSSSHPREPAAHPEGQPPPEREGHS) is disordered. A compositionally biased stretch (polar residues) spans 1310-1319 (AGQTPQGSSS). Phosphothreonine is present on threonine 1313. Serine 1317 and serine 1319 each carry phosphoserine. A helical transmembrane segment spans residues 1375–1395 (IVLPATFVFLALMLSLIIPPF). Residues 1396–1679 (GEYPALTLHP…TVLTTSVDAV (284 aa)) lie on the Extracellular side of the membrane. The N-linked (Hex...) asparagine glycan is linked to asparagine 1455. Asparagine 1527 is a glycosylation site (N-linked (Hex...) asparagine). N-linked (GlcNAc...) asparagine glycosylation occurs at asparagine 1586. N-linked (Hex...) asparagine glycosylation occurs at asparagine 1660. A helical transmembrane segment spans residues 1680 to 1700 (VAICVIFAMSFVPASFVLYLI). Over 1701–1725 (QERVNKAKHLQFVSGVSPTTYWLTN) the chain is Cytoplasmic. Residues 1726 to 1746 (FLWDIMNYTVSAALVVGIFIG) form a helical membrane-spanning segment. Residues 1747–1757 (FQKKAYTSSEN) are Extracellular-facing. Residues 1758 to 1778 (LPALVALLMLYGWAVIPMMYP) traverse the membrane as a helical segment. Over 1779–1790 (ASFLFDIPSTAY) the chain is Cytoplasmic. Residues 1791–1811 (VALSCANLFIGINSSAITFVL) traverse the membrane as a helical segment. The Extracellular segment spans residues 1812–1829 (ELFENNRTLLRINAMLRK). A glycan (N-linked (GlcNAc...) asparagine) is linked at asparagine 1817. The chain crosses the membrane as a helical span at residues 1830–1850 (LLIIFPHFCLGRGLIDLALSQ). At 1851–1879 (AVTDVYARFGEEHSSNPFQWDLIGKNLAA) the chain is on the cytoplasmic side. The helical transmembrane segment at 1880 to 1900 (MAVEGVVYFLLTLLIQYQFFF) threads the bilayer. The Extracellular segment spans residues 1901 to 2281 (SRWTTEPAKE…VDKGNSAPQG (381 aa)). A glycan (N-linked (GlcNAc...) asparagine) is linked at asparagine 1931. One can recognise an ABC transporter 2 domain in the interval 1936 to 2168 (LRLNELTKVY…FGDGYIVTMK (233 aa)). ATP-binding residues include asparagine 1972, glycine 1973, lysine 1976, threonine 1977, and threonine 1978. Mg(2+) is bound at residue threonine 1977. Residues asparagine 2004 and asparagine 2050 are each glycosylated (N-linked (GlcNAc...) asparagine). Glycine 2071 lines the ATP pocket. The essential for ATP binding and ATPase activity stretch occupies residues 2242-2247 (VFVNFA). Asparagine 2251 carries an N-linked (GlcNAc...) asparagine glycan. The disordered stretch occupies residues 2262 to 2281 (AAGASRQAKEVDKGNSAPQG).

N-glycosylated. In terms of processing, proteolytic cleavage by trypsin leads to a 120-kDa N-terminal fragment and a 115-kDa C-terminal fragment that are linked through disulfide bonds. Post-translationally, phosphorylation is independent of light exposure and modulates ATPase activity. As to expression, expressed in retina namely in the periphery and incisures of the rod outer segments (ROS).

The protein resides in the membrane. It localises to the cell projection. Its subcellular location is the cilium. The protein localises to the photoreceptor outer segment. It is found in the cytoplasmic vesicle. The protein resides in the endoplasmic reticulum. It catalyses the reaction ATP + H2O + phospholipidSide 1 = ADP + phosphate + phospholipidSide 2.. The catalysed reaction is an N-all-trans-retinylidenephosphatidylethanolamine(out) + ATP + H2O = an N-all-trans-retinylidenephosphatidylethanolamine(in) + ADP + phosphate + H(+). It carries out the reaction a 1,2-diacyl-sn-glycero-3-phosphoethanolamine(out) + ATP + H2O = a 1,2-diacyl-sn-glycero-3-phosphoethanolamine(in) + ADP + phosphate + H(+). The enzyme catalyses N-11-cis-retinylidenephosphatidylethanolamine(out) + ATP + H2O = N-11-cis-retinylidenephosphatidylethanolamine(in) + ADP + phosphate + H(+). It catalyses the reaction ATP + H2O = ADP + phosphate + H(+). All-trans-retinal transport activity is reduced by EDTA chelation of Mg2+. All-trans-retinal transport activity is inhibited by N-ethylmaleimide (NEM). Phosphatidylethanolamine transport is strongly inhibited by beryllium fluoride and NEM. Flippase that catalyzes in an ATP-dependent manner the transport of retinal-phosphatidylethanolamine conjugates like the 11-cis and all-trans isomers of N-retinylidene-phosphatidylethanolamine from the lumen to the cytoplasmic leaflet of photoreceptor outer segment disk membranes, where N-cis-retinylidene-phosphatidylethanolamine (N-cis-R-PE) is then isomerized to its all-trans isomer (N-trans-R-PE) and reduced by RDH8 to produce all-trans-retinol (all-trans-rol) and therefore prevents the accumulation of excess of 11-cis-retinal and its schiff-base conjugate and the formation of toxic bisretinoid. Displays both ATPase and GTPase activity that is strongly influenced by the lipid environment and the presence of retinoid compounds. Binds the unprotonated form of N-retinylidene-phosphatidylethanolamine with high affinity in the absence of ATP and ATP binding and hydrolysis induce a protein conformational change that causes the dissociation of N-retinylidene-phosphatidylethanolamine. The chain is Retinal-specific phospholipid-transporting ATPase ABCA4 from Bos taurus (Bovine).